Reading from the N-terminus, the 1404-residue chain is ABC transporter G family member 47 (1404 aa).

In terms of domain architecture, ABC transporter 1 spans 156 to 423 (GNALHITRKK…FQSIGFKCPE (268 aa)). 189–196 (GPPGSGKT) is a binding site for ATP. The region spanning 501–714 (ELLQANIDRE…ALNTLAVNEF (214 aa)) is the ABC transmembrane type-2 1 domain. 7 consecutive transmembrane segments (helical) span residues 519–539 (FLYI…MTVF), 565–585 (MIMF…PVFF), 607–627 (TPIS…VIGF), 638–658 (FLAL…IASL), 663–683 (VVAS…SGFI), 692–712 (WWIW…LAVN), and 751–771 (VGAL…CLIF). One can recognise an ABC transporter 2 domain in the interval 808-1059 (ITFEDIKYSI…ELIRYFEAIE (252 aa)). 852–859 (GVSGAGKT) provides a ligand contact to ATP. The region spanning 1132 to 1346 (TQCLACLWKQ…TLNGLVTSQF (215 aa)) is the ABC transmembrane type-2 2 domain. The next 7 membrane-spanning stretches (helical) occupy residues 1152 to 1172 (IAVK…MFWG), 1183 to 1199 (LFSA…TMGV), 1239 to 1259 (LPYI…MIGY), 1266 to 1286 (FFWY…YGMM), 1298 to 1318 (TVVS…LIPL), 1321 to 1341 (IPIW…LNGL), and 1373 to 1393 (LLWV…FLFG).

The protein belongs to the ABC transporter superfamily. ABCG family. PDR (TC 3.A.1.205) subfamily.

Its subcellular location is the membrane. In terms of biological role, may be a general defense protein. The chain is ABC transporter G family member 47 from Oryza sativa subsp. japonica (Rice).